Consider the following 326-residue polypeptide: MIEKSQACHDSLLDSVGQTPMVQLHQLFPKHEVFAKLEYMNPGGSMKDRPAKYIIEHGIKHGLITENTHLIESTSGNLGIALAMIAKIKGLKLTCVVDPKISPTNLKIIKSYGVNVEMVEEPDAHGGYLMTRIAKVQELLATIEDAYWINQYANELNWQSHYHGAGTEIVETIKQPIDYFVAPVSTTGSIMGMSRKIKEVHPNVQIVAVDAKGSVIFGDKPINRELPGIGASRVPEILNRSEINQVIHVDDYQSALGCRKLIDYEGIFAGGSTGSIIVAIEQLITSIEEGATIVTILPDRGDRYLDLVYSDTWLEKMKSRQGVKSE.

Position 47 is an N6-(pyridoxal phosphate)lysine (K47). Residues N77, 185-189 (STTGS), and S272 contribute to the pyridoxal 5'-phosphate site.

This sequence belongs to the cysteine synthase/cystathionine beta-synthase family. SbnA subfamily. Homodimer. The cofactor is pyridoxal 5'-phosphate.

The enzyme catalyses O-phospho-L-serine + L-glutamate = N-[(2S)-2-amino-2-carboxyethyl]-L-glutamate + phosphate + H(+). It participates in siderophore biosynthesis. Functionally, catalyzes the synthesis of N-((2S)-2-amino-2-carboxyethyl)-L-glutamate (ACEGA) from O-phospho-L-serine and L-glutamate. Involved in the biosynthesis of L-2,3-diaminopropionic acid (L-Dap), a precursor of staphyloferrin B and antibiotics. The sequence is that of N-(2-amino-2-carboxyethyl)-L-glutamate synthase (sbnA) from Staphylococcus aureus (strain bovine RF122 / ET3-1).